The primary structure comprises 366 residues: Reticulon-4-interacting protein 1, mitochondrial (366 aa).

A mitochondrion-targeting transit peptide spans 1-20; the sequence is MIEKMILRRFFSTKSSTMRA.

It belongs to the zinc-containing alcohol dehydrogenase family. Quinone oxidoreductase subfamily. In terms of tissue distribution, expressed in pharynx, muscles and intestine.

It is found in the mitochondrion. In terms of biological role, plays a role in oxygen metabolism in the mitochondria by regulating the levels of reactive oxygen species (ROS) thereby conferring resistance to oxidative stress. Involved in resistance to P.aeruginosa PA14 infection. Regulates lifespan. The protein is Reticulon-4-interacting protein 1, mitochondrial of Caenorhabditis elegans.